Reading from the N-terminus, the 279-residue chain is Fructose-1,6-bisphosphatase class 1 (279 aa).

Positions 65, 85, 87, and 88 each coordinate Mg(2+). Residues 88–91 (DGSS), tyrosine 190, and lysine 221 contribute to the substrate site. A Mg(2+)-binding site is contributed by glutamate 227.

It belongs to the FBPase class 1 family. As to quaternary structure, homotetramer. Requires Mg(2+) as cofactor.

The protein localises to the cytoplasm. It carries out the reaction beta-D-fructose 1,6-bisphosphate + H2O = beta-D-fructose 6-phosphate + phosphate. It functions in the pathway carbohydrate biosynthesis; gluconeogenesis. This is Fructose-1,6-bisphosphatase class 1 from Helicobacter hepaticus (strain ATCC 51449 / 3B1).